Reading from the N-terminus, the 461-residue chain is Bifunctional protein GlmU (461 aa).

The pyrophosphorylase stretch occupies residues 1–227 (MEVIALILAA…PDEVLGVNDR (227 aa)). UDP-N-acetyl-alpha-D-glucosamine is bound by residues 8–11 (LAAG), Lys-22, Gln-73, 78–79 (GT), 100–102 (YGD), Gly-137, Glu-152, Asn-167, and Asn-225. Asp-102 serves as a coordination point for Mg(2+). Asn-225 contributes to the Mg(2+) binding site. Positions 228 to 248 (RQLAELERIYQVHQARALMER) are linker. Residues 249–461 (GVTLRDPARF…EKARKESCAE (213 aa)) form an N-acetyltransferase region. Positions 332 and 350 each coordinate UDP-N-acetyl-alpha-D-glucosamine. His-362 functions as the Proton acceptor in the catalytic mechanism. Residues Tyr-365 and Asn-376 each contribute to the UDP-N-acetyl-alpha-D-glucosamine site. Acetyl-CoA contacts are provided by residues Ala-379, 385–386 (NY), Ser-404, Ala-422, and Arg-439.

This sequence in the N-terminal section; belongs to the N-acetylglucosamine-1-phosphate uridyltransferase family. It in the C-terminal section; belongs to the transferase hexapeptide repeat family. Homotrimer. Mg(2+) serves as cofactor.

It is found in the cytoplasm. It carries out the reaction alpha-D-glucosamine 1-phosphate + acetyl-CoA = N-acetyl-alpha-D-glucosamine 1-phosphate + CoA + H(+). The catalysed reaction is N-acetyl-alpha-D-glucosamine 1-phosphate + UTP + H(+) = UDP-N-acetyl-alpha-D-glucosamine + diphosphate. It functions in the pathway nucleotide-sugar biosynthesis; UDP-N-acetyl-alpha-D-glucosamine biosynthesis; N-acetyl-alpha-D-glucosamine 1-phosphate from alpha-D-glucosamine 6-phosphate (route II): step 2/2. The protein operates within nucleotide-sugar biosynthesis; UDP-N-acetyl-alpha-D-glucosamine biosynthesis; UDP-N-acetyl-alpha-D-glucosamine from N-acetyl-alpha-D-glucosamine 1-phosphate: step 1/1. It participates in bacterial outer membrane biogenesis; LPS lipid A biosynthesis. In terms of biological role, catalyzes the last two sequential reactions in the de novo biosynthetic pathway for UDP-N-acetylglucosamine (UDP-GlcNAc). The C-terminal domain catalyzes the transfer of acetyl group from acetyl coenzyme A to glucosamine-1-phosphate (GlcN-1-P) to produce N-acetylglucosamine-1-phosphate (GlcNAc-1-P), which is converted into UDP-GlcNAc by the transfer of uridine 5-monophosphate (from uridine 5-triphosphate), a reaction catalyzed by the N-terminal domain. This is Bifunctional protein GlmU from Methylococcus capsulatus (strain ATCC 33009 / NCIMB 11132 / Bath).